An 892-amino-acid polypeptide reads, in one-letter code: Formin-like protein 8 (892 aa).

Residues 1 to 23 (MPPAIARFVAIAAVLLCGHVAVA) form the signal peptide. Residues 43-119 (FPIEWTPPPS…SGSGSGHHGG (77 aa)) form a disordered region. Residues 47–59 (WTPPPSPPPPPAP) show a composition bias toward pro residues. Residues 87–111 (TTPTSPGTTPSPTTVAADVSKTPSG) are compositionally biased toward low complexity. A helical transmembrane segment spans residues 126–146 (IVAAGAGAAAAVALLGFACAF). Positions 188–457 (PTTPARHHGP…GSGEPRPKLK (270 aa)) are disordered. Residues 210–230 (LRSERARRGVSRDEDADHPSP) are compositionally biased toward basic and acidic residues. Low complexity-rich tracts occupy residues 268–286 (AEAWSSASASSPPTTTTAS), 297–306 (FFPPVAAIAA), and 321–330 (RTRFSTGSTP). Residues 339 to 383 (SPRPVQPSNAPPPPPPPPPPPPPPPPPKLNTAPKPPPPPPPPPSV) are compositionally biased toward pro residues. Positions 424–436 (AATTVDNNGSTSM) are enriched in polar residues. An FH2 domain is found at 446–867 (DGGSGEPRPK…GSARSFRISA (422 aa)).

Belongs to the formin-like family. Class-I subfamily.

Its subcellular location is the membrane. In Oryza sativa subsp. japonica (Rice), this protein is Formin-like protein 8 (FH8).